A 331-amino-acid polypeptide reads, in one-letter code: MKLWFPYFLAIVFLHALGLALLFMANNASFYAAASMAYMLGAKHAFDADHIACIDNTIRKLTQQGKNAYGVGFYFSMGHSSVVILMTIISAFAIAWAKEHTPMLEEIGGVVGTLVSGLFLLIIGLLNAIILLDLLKIFKKSHSNESLSQQQNEEIERLLTSRGLLNRFFKPLFNFVSKSWHIYPIGFLFGLGFDTASEIALLALSSSAIKVSMVGMLSLPILFAAGMSLFDTLDGAFMLKAYDWAFKTPLRKIYYNISITALSVFIALFIGLIELFQVVSEKLHLKFENRLLRALQSLEFTDLGYYLVGLFVIAFLGSFFLWKIKFSKLES.

At 1-5 (MKLWF) the chain is on the cytoplasmic side. The helical transmembrane segment at 6-26 (PYFLAIVFLHALGLALLFMAN) threads the bilayer. At 27-33 (NASFYAA) the chain is on the periplasmic side. The chain crosses the membrane as a helical span at residues 34–54 (ASMAYMLGAKHAFDADHIACI). The Cytoplasmic portion of the chain corresponds to 55-66 (DNTIRKLTQQGK). A helical membrane pass occupies residues 67 to 87 (NAYGVGFYFSMGHSSVVILMT). At 88–113 (IISAFAIAWAKEHTPMLEEIGGVVGT) the chain is on the periplasmic side. Residues 114-135 (LVSGLFLLIIGLLNAIILLDLL) traverse the membrane as a helical segment. The Cytoplasmic segment spans residues 136 to 178 (KIFKKSHSNESLSQQQNEEIERLLTSRGLLNRFFKPLFNFVSK). Residues 179–199 (SWHIYPIGFLFGLGFDTASEI) form a helical membrane-spanning segment. Over 200–225 (ALLALSSSAIKVSMVGMLSLPILFAA) the chain is Periplasmic. Residues 226 to 246 (GMSLFDTLDGAFMLKAYDWAF) traverse the membrane as a helical segment. Residues 247 to 252 (KTPLRK) are Cytoplasmic-facing. Residues 253-273 (IYYNISITALSVFIALFIGLI) form a helical membrane-spanning segment. The Periplasmic portion of the chain corresponds to 274–302 (ELFQVVSEKLHLKFENRLLRALQSLEFTD). Residues 303–322 (LGYYLVGLFVIAFLGSFFLW) form a helical membrane-spanning segment. The Cytoplasmic portion of the chain corresponds to 323–331 (KIKFSKLES).

It belongs to the NiCoT transporter (TC 2.A.52) family.

It localises to the cell inner membrane. Functionally, high-affinity nickel intake protein. Imports nickel ions in an energy-dependent fashion. Necessary for the expression of catalytically active urease. This is High-affinity nickel-transport protein NixA (nixA) from Helicobacter pylori (strain ATCC 700392 / 26695) (Campylobacter pylori).